The chain runs to 1412 residues: uncharacterized protein (1412 aa).

Positions 1–22 (MESINVVNSVEDLPGFNPDENV) are disordered. Coiled coils occupy residues 317-377 (NNDF…ILRH) and 732-800 (SKEA…SDDE). Residues 778-808 (SRKRKHEDIVKEHEAEKRDSDDEDDFEEVDV) are disordered. Basic and acidic residues predominate over residues 783–797 (HEDIVKEHEAEKRDS). Positions 798–808 (DDEDDFEEVDV) are enriched in acidic residues.

This is an uncharacterized protein from Magallana gigas (Pacific oyster).